Here is a 210-residue protein sequence, read N- to C-terminus: Ion-translocating oxidoreductase complex subunit G (210 aa).

The helical transmembrane segment at 9–29 (SLVLALFAIAATALVTITYAL) threads the bilayer. Threonine 176 is modified (FMN phosphoryl threonine).

This sequence belongs to the RnfG family. In terms of assembly, the complex is composed of six subunits: RnfA, RnfB, RnfC, RnfD, RnfE and RnfG. It depends on FMN as a cofactor.

The protein resides in the cell inner membrane. Part of a membrane-bound complex that couples electron transfer with translocation of ions across the membrane. This chain is Ion-translocating oxidoreductase complex subunit G, found in Aliivibrio fischeri (strain ATCC 700601 / ES114) (Vibrio fischeri).